Here is a 202-residue protein sequence, read N- to C-terminus: Superoxide dismutase [Mn] (202 aa).

His27, His82, Asp164, and His168 together coordinate Mn(2+).

Belongs to the iron/manganese superoxide dismutase family. As to quaternary structure, homodimer. The cofactor is Mn(2+).

The enzyme catalyses 2 superoxide + 2 H(+) = H2O2 + O2. Its function is as follows. Destroys superoxide anion radicals which are normally produced within the cells and which are toxic to biological systems. The sequence is that of Superoxide dismutase [Mn] (sodA) from Listeria monocytogenes serovar 1/2a (strain ATCC BAA-679 / EGD-e).